Here is an 84-residue protein sequence, read N- to C-terminus: Large ribosomal subunit protein bL27 (84 aa).

Residues 1-21 (MAHKKAGGSTRNGRDSESKRL) are disordered.

It belongs to the bacterial ribosomal protein bL27 family.

In Baumannia cicadellinicola subsp. Homalodisca coagulata, this protein is Large ribosomal subunit protein bL27.